A 182-amino-acid polypeptide reads, in one-letter code: ADP-ribosylation factor-like protein 3 (182 aa).

G2 carries N-myristoyl glycine lipidation. GTP contacts are provided by residues 24–31, 67–71, and 126–129; these read GLDNAGKT, DIGGQ, and NKQD.

It belongs to the small GTPase superfamily. Arf family.

Its subcellular location is the golgi apparatus membrane. The protein resides in the cytoplasm. The protein localises to the cytoskeleton. It is found in the spindle. It localises to the nucleus. Its subcellular location is the microtubule organizing center. The protein resides in the centrosome. The protein localises to the cell projection. It is found in the cilium. Small GTP-binding protein which cycles between an inactive GDP-bound and an active GTP-bound form, and the rate of cycling is regulated by guanine nucleotide exchange factors (GEF) and GTPase-activating proteins (GAP). Required for normal cytokinesis and cilia signaling. Required for targeting proteins to the ciliary membrane by releasing myristoylated protein from unc119 cargo adapters into the cilium. In Taeniopygia guttata (Zebra finch), this protein is ADP-ribosylation factor-like protein 3 (ARL3).